The sequence spans 304 residues: 6-dehydroglucose reductase (304 aa).

NADP(+) is bound by residues Trp28, Arg29, and Asp56. The active-site Proton donor is the Tyr61. Positions 61, 133, and 134 each coordinate D-glucose. The NADP(+) site is built by Ser163, Asn164, Gln185, Ser215, Leu217, Gly219, Gly268, Ser269, Gln270, and Arg274.

This sequence belongs to the aldo/keto reductase family.

It catalyses the reaction D-glucose + NADP(+) = 6-dehydro-D-glucose + NADPH + H(+). In terms of biological role, part of the alkanesulfonate monooxygenase (sulfo-ASMO) pathway, a D-sulfoquinovose degradation pathway that enables the complete utilization of all carbons within sulfoquinovose (SQ) with concomitant production of inorganic sulfite. Catalyzes the NADP-dependent reduction of 6-dehydro-D-glucose to D-glucose. Can also catalyze the reversible reaction, the formation of 6-dehydro-D-glucose from D-glucose in the presence of NADP(+). The protein is 6-dehydroglucose reductase of Novosphingobium aromaticivorans (strain ATCC 700278 / DSM 12444 / CCUG 56034 / CIP 105152 / NBRC 16084 / F199).